The chain runs to 171 residues: Protein GrpE (171 aa).

The segment at 1–20 (MNEEKEESPSTEAEGAGAEV) is disordered.

Belongs to the GrpE family. Homodimer.

It localises to the cytoplasm. Functionally, participates actively in the response to hyperosmotic and heat shock by preventing the aggregation of stress-denatured proteins, in association with DnaK and GrpE. It is the nucleotide exchange factor for DnaK and may function as a thermosensor. Unfolded proteins bind initially to DnaJ; upon interaction with the DnaJ-bound protein, DnaK hydrolyzes its bound ATP, resulting in the formation of a stable complex. GrpE releases ADP from DnaK; ATP binding to DnaK triggers the release of the substrate protein, thus completing the reaction cycle. Several rounds of ATP-dependent interactions between DnaJ, DnaK and GrpE are required for fully efficient folding. This Acidithiobacillus ferrooxidans (strain ATCC 23270 / DSM 14882 / CIP 104768 / NCIMB 8455) (Ferrobacillus ferrooxidans (strain ATCC 23270)) protein is Protein GrpE.